A 111-amino-acid polypeptide reads, in one-letter code: Cytochrome c oxidase subunit 6A1, mitochondrial (111 aa).

A mitochondrion-targeting transit peptide spans 1 to 26; that stretch reads MASAVLSASRVSGLLGRALPRVGRPM. Over 27–36 the chain is Mitochondrial matrix; that stretch reads SSGAHGEEGS. A helical membrane pass occupies residues 37-61; it reads ARIWKALTYFVALPGVGVSMLNVFL. Topologically, residues 62 to 111 are mitochondrial intermembrane; that stretch reads KSRHEEHERPEFVAYPHLRIRTKPFPWGDGNHTLFHNPHMNPLPTGYEDE.

Belongs to the cytochrome c oxidase subunit 6A family. In terms of assembly, component of the cytochrome c oxidase (complex IV, CIV), a multisubunit enzyme composed of 14 subunits. The complex is composed of a catalytic core of 3 subunits MT-CO1, MT-CO2 and MT-CO3, encoded in the mitochondrial DNA, and 11 supernumerary subunits COX4I, COX5A, COX5B, COX6A, COX6B, COX6C, COX7A, COX7B, COX7C, COX8 and NDUFA4, which are encoded in the nuclear genome. The complex exists as a monomer or a dimer and forms supercomplexes (SCs) in the inner mitochondrial membrane with NADH-ubiquinone oxidoreductase (complex I, CI) and ubiquinol-cytochrome c oxidoreductase (cytochrome b-c1 complex, complex III, CIII), resulting in different assemblies (supercomplex SCI(1)III(2)IV(1) and megacomplex MCI(2)III(2)IV(2)).

It is found in the mitochondrion inner membrane. Its pathway is energy metabolism; oxidative phosphorylation. Functionally, component of the cytochrome c oxidase, the last enzyme in the mitochondrial electron transport chain which drives oxidative phosphorylation. The respiratory chain contains 3 multisubunit complexes succinate dehydrogenase (complex II, CII), ubiquinol-cytochrome c oxidoreductase (cytochrome b-c1 complex, complex III, CIII) and cytochrome c oxidase (complex IV, CIV), that cooperate to transfer electrons derived from NADH and succinate to molecular oxygen, creating an electrochemical gradient over the inner membrane that drives transmembrane transport and the ATP synthase. Cytochrome c oxidase is the component of the respiratory chain that catalyzes the reduction of oxygen to water. Electrons originating from reduced cytochrome c in the intermembrane space (IMS) are transferred via the dinuclear copper A center (CU(A)) of subunit 2 and heme A of subunit 1 to the active site in subunit 1, a binuclear center (BNC) formed by heme A3 and copper B (CU(B)). The BNC reduces molecular oxygen to 2 water molecules unsing 4 electrons from cytochrome c in the IMS and 4 protons from the mitochondrial matrix. The protein is Cytochrome c oxidase subunit 6A1, mitochondrial (Cox6a1) of Rattus norvegicus (Rat).